A 311-amino-acid polypeptide reads, in one-letter code: Class E basic helix-loop-helix protein 22 (311 aa).

The interval 22-170 (AKRMESAFRS…GGSKKSKEQK (149 aa)) is disordered. Residues 81-96 (GESASRSSVAESSGGE) show a composition bias toward low complexity. Residues 125–147 (AGGGGGGGGGGGGGPGGGGGGGL) are compositionally biased toward gly residues. Residues 171 to 225 (ALRLNINARERRRMHDLNDALDELRAVIPYAHSPSVRKLSKIATLLLAKNYILMQ) enclose the bHLH domain.

It localises to the nucleus. May act as a transcriptional repressor. This Gallus gallus (Chicken) protein is Class E basic helix-loop-helix protein 22 (BHLHE22).